Here is a 401-residue protein sequence, read N- to C-terminus: uncharacterized protein (401 aa).

This is an uncharacterized protein from Acanthamoeba polyphaga mimivirus (APMV).